The primary structure comprises 373 residues: Valienol-1-phosphate guanylyltransferase (373 aa).

Substrate-binding positions include G177 and 192–193 (EK).

This sequence belongs to the bacterial/plant glucose-1-phosphate adenylyltransferase family. It depends on Mg(2+) as a cofactor.

The catalysed reaction is valienol 1-phosphate + GTP + H(+) = GDP-valienol + diphosphate. In terms of biological role, involved in the biosynthesis of the antifungal agent validamycin A. Catalyzes the conversion of valienol 1-phosphate to GDP-valienol and less effectively to ADP-valienol or other NDP derivatives. This is Valienol-1-phosphate guanylyltransferase from Streptomyces hygroscopicus subsp. limoneus.